Consider the following 500-residue polypeptide: Apolipoprotein N-acyltransferase (500 aa).

Helical transmembrane passes span 5 to 25 (VAPFAAWFLAWIALAPLWIFV), 38 to 58 (LLLLGLTWGIGYHGVALFWIT), 74 to 94 (LAITIFCWSFISFYGGLFGAI), 111 to 131 (ILIGTAMWCVLESLWSAGPLW), 145 to 165 (AILHLGQISGPNLVTAAIVSV), and 185 to 205 (LAIATGLLITLHLIGFGLYTA). The CN hydrolase domain maps to 215-462 (LKVGIVQGNI…ETIYRRQTQN (248 aa)). Glu-261 acts as the Proton acceptor in catalysis. The active site involves Lys-318. Catalysis depends on Cys-369, which acts as the Nucleophile. The helical transmembrane segment at 469–489 (DWFTPLLVGLSFLGWSLNIFW) threads the bilayer.

The protein belongs to the CN hydrolase family. Apolipoprotein N-acyltransferase subfamily.

The protein resides in the cell inner membrane. The enzyme catalyses N-terminal S-1,2-diacyl-sn-glyceryl-L-cysteinyl-[lipoprotein] + a glycerophospholipid = N-acyl-S-1,2-diacyl-sn-glyceryl-L-cysteinyl-[lipoprotein] + a 2-acyl-sn-glycero-3-phospholipid + H(+). Its pathway is protein modification; lipoprotein biosynthesis (N-acyl transfer). Catalyzes the phospholipid dependent N-acylation of the N-terminal cysteine of apolipoprotein, the last step in lipoprotein maturation. The protein is Apolipoprotein N-acyltransferase of Nostoc sp. (strain PCC 7120 / SAG 25.82 / UTEX 2576).